Here is a 95-residue protein sequence, read N- to C-terminus: MSVTADDVRRIARLARIAEPTDRIDTLVGELNGILSWIEQLNEVDVDGVEPMTTPVKFPLPQRADEVTDGNCRDKVLANAPKSDEGFFVVPKSVE.

Belongs to the GatC family. As to quaternary structure, heterotrimer of A, B and C subunits.

The enzyme catalyses L-glutamyl-tRNA(Gln) + L-glutamine + ATP + H2O = L-glutaminyl-tRNA(Gln) + L-glutamate + ADP + phosphate + H(+). It carries out the reaction L-aspartyl-tRNA(Asn) + L-glutamine + ATP + H2O = L-asparaginyl-tRNA(Asn) + L-glutamate + ADP + phosphate + 2 H(+). Its function is as follows. Allows the formation of correctly charged Asn-tRNA(Asn) or Gln-tRNA(Gln) through the transamidation of misacylated Asp-tRNA(Asn) or Glu-tRNA(Gln) in organisms which lack either or both of asparaginyl-tRNA or glutaminyl-tRNA synthetases. The reaction takes place in the presence of glutamine and ATP through an activated phospho-Asp-tRNA(Asn) or phospho-Glu-tRNA(Gln). The sequence is that of Aspartyl/glutamyl-tRNA(Asn/Gln) amidotransferase subunit C from Maricaulis maris (strain MCS10) (Caulobacter maris).